Reading from the N-terminus, the 299-residue chain is 4-diphosphocytidyl-2-C-methyl-D-erythritol kinase (299 aa).

Lys19 is an active-site residue. Position 110–120 (110–120 (PVASGIGGGSA)) interacts with ATP. Asp152 is an active-site residue.

The protein belongs to the GHMP kinase family. IspE subfamily.

It carries out the reaction 4-CDP-2-C-methyl-D-erythritol + ATP = 4-CDP-2-C-methyl-D-erythritol 2-phosphate + ADP + H(+). It functions in the pathway isoprenoid biosynthesis; isopentenyl diphosphate biosynthesis via DXP pathway; isopentenyl diphosphate from 1-deoxy-D-xylulose 5-phosphate: step 3/6. In terms of biological role, catalyzes the phosphorylation of the position 2 hydroxy group of 4-diphosphocytidyl-2C-methyl-D-erythritol. The sequence is that of 4-diphosphocytidyl-2-C-methyl-D-erythritol kinase from Agrobacterium fabrum (strain C58 / ATCC 33970) (Agrobacterium tumefaciens (strain C58)).